The primary structure comprises 955 residues: Thrombospondin-4 (955 aa).

The first 24 residues, 1–24 (MPRRKGLCLFLQMLLLHLYGVCQA), serve as a signal peptide directing secretion. Positions 25-192 (QPNYQVFDLL…MDELKLVMGG (168 aa)) constitute a Laminin G-like domain. Residues 281–320 (PKPRCDATSCFRGVRCIDTEGGFQCGPCPEGYTGNGVICT) form the EGF-like 1 domain. Disulfide bonds link cysteine 285-cysteine 296, cysteine 290-cysteine 305, cysteine 308-cysteine 319, cysteine 325-cysteine 336, cysteine 330-cysteine 345, cysteine 348-cysteine 372, cysteine 378-cysteine 392, cysteine 386-cysteine 401, cysteine 404-cysteine 416, cysteine 422-cysteine 435, cysteine 429-cysteine 445, cysteine 447-cysteine 458, cysteine 474-cysteine 479, cysteine 484-cysteine 504, cysteine 520-cysteine 540, cysteine 543-cysteine 563, cysteine 579-cysteine 599, cysteine 602-cysteine 622, cysteine 640-cysteine 660, cysteine 680-cysteine 700, and cysteine 716-cysteine 937. In terms of domain architecture, EGF-like 2; calcium-binding spans 321–358 (DVDECRLNPCFLGVRCINTSPGFKCESCPPGYTGSTIQ). Residues 374-415 (DTNECENGRNGGCTSNSLCINTMGSFRCGGCKPGYVGDQIKG) enclose the EGF-like 3; calcium-binding domain. Residues 418-459 (PEKSCRHGQNPCHASAQCSEEKDGDVTCTCSVGWAGNGYLCG) enclose the EGF-like 4 domain. TSP type-3 repeat units lie at residues 460–492 (KDTDIDGYPDEALPCPDKNCKKDNCVYVPNSGQ), 493–528 (EDTDKDNIGDACDEDADGDGILNEQDNCVLAANIDQ), 529–551 (KNSDQDIFGDACDNCRLTLNNDQ), 552–587 (RDTDNDGKGDACDDDMDGDGIKNILDNCQRVPNVDQ), 588–610 (KDKDGDGVGDICDSCPDIINPNQ), 611–648 (SDIDNDLVGDSCDTNQDSDGDGHQDSTDNCPTVINSNQ), 649–688 (LDTDKDGIGDECDDDDDNDGIPDTVPPGPDNCKLVPNPGQ), and 689–724 (EDDNNDGVGDVCEADFDQDTVIDRIDVCPENAEITL). A glycan (N-linked (GlcNAc...) asparagine) is linked at asparagine 609. Residues 610–678 (QSDIDNDLVG…IPDTVPPGPD (69 aa)) are disordered. Polar residues predominate over residues 637–649 (TDNCPTVINSNQL). Acidic residues predominate over residues 657–668 (GDECDDDDDNDG). The 215-residue stretch at 728–942 (RAYQTVVLDP…LKYRCNDTIP (215 aa)) folds into the TSP C-terminal domain. Asparagine 938 carries N-linked (GlcNAc...) asparagine glycosylation.

Belongs to the thrombospondin family. In terms of assembly, homotrimer; disulfide-linked.

It localises to the endoplasmic reticulum. The protein resides in the sarcoplasmic reticulum. Its subcellular location is the secreted. The protein localises to the extracellular space. It is found in the extracellular matrix. Adhesive glycoprotein that mediates cell-to-cell and cell-to-matrix interactions and may be involved in various processes including cellular proliferation, migration, adhesion and attachment. May play a role in ER stress response. May participate in the genesis and function of cardiac and skeletal muscle. The polypeptide is Thrombospondin-4 (thbs4) (Xenopus laevis (African clawed frog)).